The sequence spans 157 residues: Class 10 plant pathogenesis-related protein 2E (157 aa).

Aspartate 8 contributes to the trans-zeatin binding site. Residues proline 32, valine 35, and isoleucine 38 each coordinate Ca(2+). Trans-zeatin-binding residues include glutamate 60, histidine 69, tyrosine 81, and tyrosine 83.

It belongs to the BetVI family.

Its subcellular location is the cytoplasm. The protein resides in the cytosol. Class II ribonuclease (RNase). Binds to cytokinins. Interacts with melatonin. This chain is Class 10 plant pathogenesis-related protein 2E, found in Lupinus luteus (European yellow lupine).